A 242-amino-acid polypeptide reads, in one-letter code: uncharacterized protein (242 aa).

The span at 1-12 (MKLRRERFERRN) shows a compositional bias: basic and acidic residues. The tract at residues 1–21 (MKLRRERFERRNGSGKNSQSS) is disordered. Over 1-23 (MKLRRERFERRNGSGKNSQSSSS) the chain is Cytoplasmic. Residues 24-44 (WMVTFTDLITLILVFFILLFS) traverse the membrane as a helical segment. The Extracellular portion of the chain corresponds to 45–242 (MSQIDLQKFK…VIKKSKTTSS (198 aa)). The disordered stretch occupies residues 64 to 91 (GNGLQPDQTSIEKKNTSPSDTKKQEDQQ). The span at 73–89 (SIEKKNTSPSDTKKQED) shows a compositional bias: basic and acidic residues. Residues 117-238 (ERGVVLVLQE…RVEIVIKKSK (122 aa)) enclose the OmpA-like domain.

The protein belongs to the MotB family.

The protein localises to the cell membrane. In terms of biological role, may be involved in some transport function. This is an uncharacterized protein from Bacillus subtilis (strain 168).